The primary structure comprises 507 residues: Nuclear poly(A) polymerase 3 (507 aa).

ATP is bound by residues 79 to 81 (YGS), 91 to 94 (SDID), aspartate 147, lysine 208, tyrosine 217, and 226 to 227 (GV). Mg(2+) contacts are provided by aspartate 92, aspartate 94, and aspartate 147.

This sequence belongs to the poly(A) polymerase family. Monomer. Forms a complex with cleavage and polyadenylation specificity factor (CPSF) subunits FIPS5 and CPSF30. Mg(2+) is required as a cofactor. The cofactor is Mn(2+). In terms of tissue distribution, expressed in leaves (mostly in petioles and tips), cotyledon, roots (tips, vascular tissue of the radicle, and throughout the root tissue excluding the elongation zone), stems, and flowers (restricted to the stigma and the pollen in mature anthers). Active in the primary and secondary root systems.

It is found in the nucleus. It catalyses the reaction RNA(n) + ATP = RNA(n)-3'-adenine ribonucleotide + diphosphate. Essential protein. Polymerase that creates the 3'-poly(A) tail of mRNA's. Also required for the endoribonucleolytic cleavage reaction at some polyadenylation sites. May acquire specificity through interaction with a cleavage and polyadenylation specificity factor (CPSF) at its C-terminus. The chain is Nuclear poly(A) polymerase 3 from Arabidopsis thaliana (Mouse-ear cress).